Here is a 361-residue protein sequence, read N- to C-terminus: MTQTPPPAPGPSGVRQAVRDIPAYPFTPIDVPYKLDQNENPYDFPPELKQKAAERMLAHPWNRYPDLHADTLRAAIAGYEGWDAAGVVITPGSNVLIKILTELGGIGQTVLTTDPTFSVYTLEAAMLGAELVLTPLNPDFSLPVEATLQALAAHAPGVFYVTQPHAPTGHSDRPEDVRRVVEVADRLGWVTVIDEAYSQYAGTDYRELVRAGKHVLSLRTFSKAWGLAGVRAGYLLTNPELAGHLQKLVSAFTINFLTQAVIETALEHPEYMRERVAEAIAERGRIYAAVQGHPTCTIFPSNTNFFLLKTPDADAAYRHLLEHGIVCRRQDKLRGLDGCLRIAVGTPAENDALIAAILALR.

Lysine 223 is modified (N6-(pyridoxal phosphate)lysine).

The protein belongs to the class-II pyridoxal-phosphate-dependent aminotransferase family. Histidinol-phosphate aminotransferase subfamily. As to quaternary structure, homodimer. It depends on pyridoxal 5'-phosphate as a cofactor.

The catalysed reaction is L-histidinol phosphate + 2-oxoglutarate = 3-(imidazol-4-yl)-2-oxopropyl phosphate + L-glutamate. The protein operates within amino-acid biosynthesis; L-histidine biosynthesis; L-histidine from 5-phospho-alpha-D-ribose 1-diphosphate: step 7/9. The polypeptide is Histidinol-phosphate aminotransferase (Deinococcus radiodurans (strain ATCC 13939 / DSM 20539 / JCM 16871 / CCUG 27074 / LMG 4051 / NBRC 15346 / NCIMB 9279 / VKM B-1422 / R1)).